Reading from the N-terminus, the 75-residue chain is Toxin-like peptide AaF1CA7 (75 aa).

The first 22 residues, 1–22 (MMKLMLFSIIVILFSLIGSIHG), serve as a signal peptide directing secretion. The region spanning 25-75 (VPGNYPLDSSDDTYLCAPLGENPSCIQICRKHGVKYGYCYAFQCWCEYFGR) is the LCN-type CS-alpha/beta domain. Disulfide bonds link Cys-40/Cys-63, Cys-49/Cys-68, and Cys-53/Cys-70.

It belongs to the long (3 C-C) scorpion toxin superfamily. In terms of tissue distribution, expressed by the venom gland.

It is found in the secreted. Its function is as follows. Probable neurotoxin that inhibits ion channels. The polypeptide is Toxin-like peptide AaF1CA7 (Androctonus australis (Sahara scorpion)).